Consider the following 1502-residue polypeptide: Leucine-rich repeat-containing protein 9 (1502 aa).

29 LRR repeats span residues 53-79 (FPNL…HFLK), 97-119 (CADL…LENL), 120-141 (LKLE…LDMM), 142-164 (QNLK…LDPN), 166-188 (QLER…NLAR), 224-247 (LQRL…TVVK), 296-320 (EHEL…KFHE), 699-721 (YSQI…ISRL), 722-744 (NGLR…SYLT), 746-764 (LEYL…GFKG), 765-790 (LGKL…ILRK), 792-814 (AIQL…VLKD), 822-849 (LTHL…RITQ), 894-916 (YTKI…LEKL), 917-938 (VNLR…LEHC), 939-960 (VNLE…LSKL), 961-983 (TKLR…VIES), 985-1009 (SHLH…GYKL), 1011-1030 (ELYL…SLKG), 1031-1053 (LNNL…NYRL), 1100-1123 (FTEL…PADH), 1124-1146 (FRNV…LIFL), 1147-1170 (PNIK…KSQS), 1209-1232 (MQSL…QLGR), 1234-1255 (RNLK…LENL), 1256-1278 (QFLR…SFAK), 1280-1301 (NSLV…LPPL), 1302-1325 (LKLR…KLEV), and 1327-1351 (PALV…LLVV). Positions 317 to 342 (KFHENNCDTEESNSQQSSERRKNNSD) are disordered. Positions 1479–1496 (TQQSGQARSQQKHPFNQE) are enriched in polar residues. Residues 1479-1502 (TQQSGQARSQQKHPFNQENEGRCV) form a disordered region.

The chain is Leucine-rich repeat-containing protein 9 (lrrc9) from Xenopus tropicalis (Western clawed frog).